The chain runs to 466 residues: Asparagine--tRNA ligase (466 aa).

It belongs to the class-II aminoacyl-tRNA synthetase family. Homodimer.

Its subcellular location is the cytoplasm. The catalysed reaction is tRNA(Asn) + L-asparagine + ATP = L-asparaginyl-tRNA(Asn) + AMP + diphosphate + H(+). This is Asparagine--tRNA ligase from Shewanella denitrificans (strain OS217 / ATCC BAA-1090 / DSM 15013).